An 82-amino-acid chain; its full sequence is Exodeoxyribonuclease 7 small subunit (82 aa).

The protein belongs to the XseB family. In terms of assembly, heterooligomer composed of large and small subunits.

The protein resides in the cytoplasm. It catalyses the reaction Exonucleolytic cleavage in either 5'- to 3'- or 3'- to 5'-direction to yield nucleoside 5'-phosphates.. Functionally, bidirectionally degrades single-stranded DNA into large acid-insoluble oligonucleotides, which are then degraded further into small acid-soluble oligonucleotides. The protein is Exodeoxyribonuclease 7 small subunit of Mycobacterium avium (strain 104).